The following is a 206-amino-acid chain: Max dimerization protein 3 (206 aa).

Residues 8-25 form an interaction with SIN3A and SIN3B region; that stretch reads IQVLLQAAEFLERREREA. 2 disordered regions span residues 25-67 and 146-171; these read AEHG…ELEK and RERLRADSLDSSGLSSERSDSDQEEL. Positions 57 to 109 constitute a bHLH domain; the sequence is SGRSVHNELEKRRRAQLKRCLERLKQQMPLGADCARYTTLSLLRRARMHIQKL.

Efficient DNA binding requires dimerization with another bHLH protein. Binds DNA as a heterodimer with MAX. Interacts with SIN3A AND SIN3B. Interacts with RNF17.

The protein localises to the nucleus. Transcriptional repressor. Binds with MAX to form a sequence-specific DNA-binding protein complex which recognizes the core sequence 5'-CAC[GA]TG-3'. Antagonizes MYC transcriptional activity by competing for MAX and suppresses MYC dependent cell transformation. This is Max dimerization protein 3 (MXD3) from Homo sapiens (Human).